The chain runs to 342 residues: MKLLSLTGVAGVLATCVAATPLVKRLPSGSDPAFSQPKSVLDAGLTCQGASPSSVSKPILLVPGTGTTGPQSFDSNWIPLSTQLGYTPCWISPPPFMLNDTQVNTEYMVNAITALYAGSGNNKLPVLTWSQGGLVAQWGLTFFPSIRSKVDRLMAFAPDYKGTVLAGPLDALAVSAPSVWQQTTGSALTTALRNAGGLTQIVPTTNLYSATDEIVQPQVSNSPLDSSYLFNGKNVQAQAVCGPLFVIDHAGSLTSQFSYVVGRSALRSTTGQARSADYGITDCNPLPANDLTPEQKVAAAALLAPAAAAIVAGPKQNCEPDLMPYARPFAVGKRTCSGIVTP.

An N-terminal signal peptide occupies residues 1–18 (MKLLSLTGVAGVLATCVA). The propeptide occupies 19–25 (ATPLVKR). A disulfide bond links cysteine 47 and cysteine 89. An N-linked (GlcNAc...) asparagine glycan is attached at asparagine 99. Active-site residues include serine 130, aspartate 212, and histidine 249. Cystine bridges form between cysteine 241/cysteine 283 and cysteine 318/cysteine 336.

The catalysed reaction is a triacylglycerol + H2O = a diacylglycerol + a fatty acid + H(+). In terms of biological role, hydrolysis of triglycerides. Is very stereospecific both in hydrolysis and in organic synthesis and has a potentially important application in glucolipid synthesis. This chain is Lipase B, found in Pseudozyma antarctica (Yeast).